The following is a 427-amino-acid chain: Enolase (427 aa).

Glutamine 162 is a binding site for (2R)-2-phosphoglycerate. The Proton donor role is filled by glutamate 204. 3 residues coordinate Mg(2+): aspartate 241, glutamate 282, and aspartate 309. (2R)-2-phosphoglycerate-binding residues include lysine 334, arginine 363, serine 364, and lysine 385. Lysine 334 serves as the catalytic Proton acceptor.

The protein belongs to the enolase family. It depends on Mg(2+) as a cofactor.

Its subcellular location is the cytoplasm. The protein localises to the secreted. It is found in the cell surface. The catalysed reaction is (2R)-2-phosphoglycerate = phosphoenolpyruvate + H2O. Its pathway is carbohydrate degradation; glycolysis; pyruvate from D-glyceraldehyde 3-phosphate: step 4/5. Functionally, catalyzes the reversible conversion of 2-phosphoglycerate (2-PG) into phosphoenolpyruvate (PEP). It is essential for the degradation of carbohydrates via glycolysis. The sequence is that of Enolase from Parafrankia sp. (strain EAN1pec).